The sequence spans 289 residues: 4-hydroxy-tetrahydrodipicolinate synthase (289 aa).

Threonine 46 lines the pyruvate pocket. The active-site Proton donor/acceptor is the tyrosine 134. The active-site Schiff-base intermediate with substrate is lysine 162. Valine 204 contacts pyruvate.

It belongs to the DapA family. As to quaternary structure, homotetramer; dimer of dimers.

Its subcellular location is the cytoplasm. It carries out the reaction L-aspartate 4-semialdehyde + pyruvate = (2S,4S)-4-hydroxy-2,3,4,5-tetrahydrodipicolinate + H2O + H(+). It functions in the pathway amino-acid biosynthesis; L-lysine biosynthesis via DAP pathway; (S)-tetrahydrodipicolinate from L-aspartate: step 3/4. Catalyzes the condensation of (S)-aspartate-beta-semialdehyde [(S)-ASA] and pyruvate to 4-hydroxy-tetrahydrodipicolinate (HTPA). The sequence is that of 4-hydroxy-tetrahydrodipicolinate synthase from Bacillus velezensis (strain DSM 23117 / BGSC 10A6 / LMG 26770 / FZB42) (Bacillus amyloliquefaciens subsp. plantarum).